The primary structure comprises 555 residues: Probable ferredoxin/ferredoxin--NADP reductase (555 aa).

2 consecutive 4Fe-4S ferredoxin-type domains span residues 2 to 29 (PYII…PTPD) and 37 to 66 (EMLY…SDTR). [4Fe-4S] cluster contacts are provided by Cys-9, Cys-15, Cys-19, Cys-46, Cys-49, Cys-52, and Cys-56. The ferredoxin--NADP reductase stretch occupies residues 115 to 555 (VAIVGSGPAA…APPLRLRALS (441 aa)). FAD contacts are provided by Ala-123, Glu-143, Leu-151, and Ile-187. Residues Arg-213, 258–261 (NGNV), 302–303 (RR), and Glu-314 each bind NADP(+). FAD contacts are provided by residues Trp-453 and 460-462 (GFI). Gly-460 is an NADP(+) binding site.

The protein in the C-terminal section; belongs to the ferredoxin--NADP reductase family. Requires [4Fe-4S] cluster as cofactor. FAD is required as a cofactor.

The enzyme catalyses 2 reduced [2Fe-2S]-[ferredoxin] + NADP(+) + H(+) = 2 oxidized [2Fe-2S]-[ferredoxin] + NADPH. In Mycobacterium leprae (strain TN), this protein is Probable ferredoxin/ferredoxin--NADP reductase (fprB).